The primary structure comprises 247 residues: Pulmonary surfactant-associated protein A (247 aa).

An N-terminal signal peptide occupies residues 1-19 (MWCSLALILILVTVSGIMC). A glycan (N-linked (GlcNAc...) asparagine) is linked at asparagine 20. The region spanning 27–99 (GSPGIPGTPG…PGERGPPGLP (73 aa)) is the Collagen-like domain. Proline 29, proline 32, proline 35, proline 41, proline 53, proline 56, proline 62, proline 66, and proline 69 each carry 4-hydroxyproline. The tract at residues 32-101 (PGTPGSHGLP…ERGPPGLPAS (70 aa)) is disordered. A compositionally biased stretch (basic and acidic residues) spans 41 to 50 (PGRDGRDGVK). Positions 53–64 (PGPPGPMGPPGV) are enriched in pro residues. A compositionally biased stretch (basic and acidic residues) spans 83 to 92 (ERGDKGDPGE). In terms of domain architecture, C-type lectin spans 131 to 247 (LAVGDKVFAT…LQSRLTICEF (117 aa)). 2 disulfide bridges follow: cysteine 154-cysteine 245 and cysteine 223-cysteine 237. N-linked (GlcNAc...) asparagine glycosylation is present at asparagine 206. Positions 214, 216, 233, and 234 each coordinate Ca(2+).

Belongs to the SFTPA family. As to quaternary structure, oligomeric complex of 6 set of homotrimers.

The protein resides in the secreted. Its subcellular location is the extracellular space. It is found in the extracellular matrix. It localises to the surface film. Its function is as follows. In presence of calcium ions, it binds to surfactant phospholipids and contributes to lower the surface tension at the air-liquid interface in the alveoli of the mammalian lung and is essential for normal respiration. Enhances the expression of MYO18A/SP-R210 on alveolar macrophages. This chain is Pulmonary surfactant-associated protein A (SFTPA1), found in Cavia porcellus (Guinea pig).